Consider the following 802-residue polypeptide: Leucine--tRNA ligase (802 aa).

The 'HIGH' region signature appears at 41–52 (PYPSGQGLHVGH). A 'KMSKS' region motif is present at residues 580–584 (KMSKS). Residue lysine 583 coordinates ATP.

It belongs to the class-I aminoacyl-tRNA synthetase family.

The protein localises to the cytoplasm. It catalyses the reaction tRNA(Leu) + L-leucine + ATP = L-leucyl-tRNA(Leu) + AMP + diphosphate. This is Leucine--tRNA ligase from Alkaliphilus oremlandii (strain OhILAs) (Clostridium oremlandii (strain OhILAs)).